The chain runs to 274 residues: 2,3,4,5-tetrahydropyridine-2,6-dicarboxylate N-succinyltransferase (274 aa).

2 residues coordinate substrate: Arg106 and Asp143.

This sequence belongs to the transferase hexapeptide repeat family. Homotrimer.

The protein resides in the cytoplasm. The catalysed reaction is (S)-2,3,4,5-tetrahydrodipicolinate + succinyl-CoA + H2O = (S)-2-succinylamino-6-oxoheptanedioate + CoA. It participates in amino-acid biosynthesis; L-lysine biosynthesis via DAP pathway; LL-2,6-diaminopimelate from (S)-tetrahydrodipicolinate (succinylase route): step 1/3. The chain is 2,3,4,5-tetrahydropyridine-2,6-dicarboxylate N-succinyltransferase from Rickettsia typhi (strain ATCC VR-144 / Wilmington).